A 205-amino-acid polypeptide reads, in one-letter code: Heme-binding protein 2 (205 aa).

Residues 1-37 (MAEEPEPDLGVAEGSEDQALEMPSWKAPEDIDPQPGS) are disordered. A2 is modified (N-acetylalanine). S181 carries the post-translational modification Phosphoserine.

It belongs to the HEBP family. As to quaternary structure, monomer. Interacts with LRPPRC. May interact with BCL2L1; an interaction with BCL2L1 was observed using a peptide, but not with the full-length protein. The full-length protein would have to undergo a major conformation change for the interaction to occur. Interacts with PDCD6.

The protein localises to the cytoplasm. Its subcellular location is the mitochondrion. Functionally, can promote mitochondrial permeability transition and facilitate necrotic cell death under different types of stress conditions. May have low affinity for heme. This is Heme-binding protein 2 (Hebp2) from Mus musculus (Mouse).